The sequence spans 133 residues: Ribonuclease P protein component (133 aa).

Belongs to the RnpA family. In terms of assembly, consists of a catalytic RNA component (M1 or rnpB) and a protein subunit.

It catalyses the reaction Endonucleolytic cleavage of RNA, removing 5'-extranucleotides from tRNA precursor.. Functionally, RNaseP catalyzes the removal of the 5'-leader sequence from pre-tRNA to produce the mature 5'-terminus. It can also cleave other RNA substrates such as 4.5S RNA. The protein component plays an auxiliary but essential role in vivo by binding to the 5'-leader sequence and broadening the substrate specificity of the ribozyme. The chain is Ribonuclease P protein component from Synechococcus sp. (strain JA-2-3B'a(2-13)) (Cyanobacteria bacterium Yellowstone B-Prime).